A 305-amino-acid chain; its full sequence is Porphobilinogen deaminase (305 aa).

S-(dipyrrolylmethanemethyl)cysteine is present on Cys240.

It belongs to the HMBS family. In terms of assembly, monomer. It depends on dipyrromethane as a cofactor.

It catalyses the reaction 4 porphobilinogen + H2O = hydroxymethylbilane + 4 NH4(+). The protein operates within porphyrin-containing compound metabolism; protoporphyrin-IX biosynthesis; coproporphyrinogen-III from 5-aminolevulinate: step 2/4. Functionally, tetrapolymerization of the monopyrrole PBG into the hydroxymethylbilane pre-uroporphyrinogen in several discrete steps. The protein is Porphobilinogen deaminase of Xylella fastidiosa (strain M23).